A 394-amino-acid chain; its full sequence is Zinc finger and SCAN domain-containing protein 9 (394 aa).

Residue Lys-26 forms a Glycyl lysine isopeptide (Lys-Gly) (interchain with G-Cter in SUMO2) linkage. An SCAN box domain is found at 52–134 (RRHFRQLCYQ…ILLEDLEREL (83 aa)). Glycyl lysine isopeptide (Lys-Gly) (interchain with G-Cter in SUMO2) cross-links involve residues Lys-215 and Lys-238. 5 C2H2-type zinc fingers span residues 254-276 (HKCD…QRIH), 282-304 (YECN…RGIH), 310-332 (YHCK…QRIH), 338-360 (YQCS…QRSH), and 366-388 (HQCI…QKIH).

It belongs to the krueppel C2H2-type zinc-finger protein family.

It localises to the nucleus. In terms of biological role, may be involved in transcriptional regulation. This chain is Zinc finger and SCAN domain-containing protein 9 (ZSCAN9), found in Homo sapiens (Human).